We begin with the raw amino-acid sequence, 265 residues long: MFKWPWKADDESGNAEMPWEQALAIPVLAHLSSTEQHKLTQMAARFLQQKRLVALQGLELTPLHQARIAMLFCLPVLELGIEWLDGFHEVLIYPAPFIVDDEWEDDIGLVHNQRVVQSGQSWQQGPVVLNWLDIQDSFDASGFNLVVHEVAHKLDTRNGDRASGVPLIPLREVAGWEHDLHAAMNNIQDEIDLVGESAASIDAYAATDPAECFAVLSEYFFSAPELFAPRFPALWQRFCHFYRQDPLARRRENGLQDEGDRRIVH.

4 residues coordinate Zn(2+): His111, His148, His152, and Glu211.

Belongs to the MtfA family. As to quaternary structure, monomer in solution. Interacts with Mlc. Requires Zn(2+) as cofactor.

It localises to the cytoplasm. With respect to regulation, association between Mlc and MtfA may induce structural changes that activate the peptidase activity of MtfA while inactivating the DNA-binding ability of Mlc. The aminopeptidase activity is partially inhibited by metal chelators such as EDTA and phenantroline, but not by inhibitors for serine-, aspartyl-, or cysteine-proteases. In terms of biological role, involved in the modulation of the activity of the glucose-phosphotransferase system (glucose-PTS). Interacts with the transcriptional repressor Mlc, preventing its interaction with DNA and leading to the modulation of expression of genes regulated by Mlc, including ptsG, which encodes the PTS system glucose-specific EIICB component. Shows zinc-dependent metallopeptidase activity. In vitro, can cleave several artificial substrates. The highest activity is observed for L-alanine fused to 4-nitroanilide (L-alanine-pNA). Shows lower activity towards proline-pNA and valine-pNA. In Klebsiella pneumoniae subsp. pneumoniae (strain ATCC 700721 / MGH 78578), this protein is Mlc titration factor A.